The primary structure comprises 582 residues: External alternative NAD(P)H-ubiquinone oxidoreductase B4, mitochondrial (582 aa).

The transit peptide at 1-39 (MSFHSFYQRASSLFKAYPSTSKILLLSTFSGGGGVLVYS) directs the protein to the mitochondrion. An FAD-binding site is contributed by 65–95 (KVVVLGSGWSGYSFLSYLNNPNYDVQVVSPR). Residue 227–263 (LHFVVVGGGPTGVEFSAELHDFLVQDVAKIYPKVQEF) coordinates NAD(+). The region spanning 384–419 (RVMEDIAAIFNKADKGNTGTLKKKDFNSVVKDICQR) is the EF-hand domain. Ca(2+) contacts are provided by D397, T401, T403, and D408. Residues 573-582 (FVFGRDSSSI) carry the Microbody targeting signal motif.

It belongs to the NADH dehydrogenase family. It depends on FAD as a cofactor. Expressed in seedlings, roots, cotyledons, stems, buds and flowers and, to a lower extent, in stems and leaves.

It localises to the mitochondrion inner membrane. It is found in the peroxisome. It catalyses the reaction a quinone + NADH + H(+) = a quinol + NAD(+). The enzyme catalyses a ubiquinone + NADH + H(+) = a ubiquinol + NAD(+). With respect to regulation, no effect of calcium ions on activity. Alternative NADH-ubiquinone oxidoreductase which catalyzes the oxidation of mitochondrial NADH does not translocate protons across the inner mitochondrial membrane. NAD(P)H dehydrogenase; more efficient on NADH. In Arabidopsis thaliana (Mouse-ear cress), this protein is External alternative NAD(P)H-ubiquinone oxidoreductase B4, mitochondrial (NDB4).